A 447-amino-acid polypeptide reads, in one-letter code: Maltoporin (447 aa).

Positions 1–26 (MELRMKKVSVIAAAVAATLAAGSAFA) are cleaved as a signal peptide.

The protein belongs to the porin LamB (TC 1.B.3) family. Homotrimer formed of three 18-stranded antiparallel beta-barrels, containing three independent channels.

It is found in the cell outer membrane. The catalysed reaction is beta-maltose(in) = beta-maltose(out). Functionally, involved in the transport of maltose and maltodextrins. The sequence is that of Maltoporin from Vibrio campbellii (strain ATCC BAA-1116).